A 1390-amino-acid polypeptide reads, in one-letter code: DNA-directed RNA polymerase III subunit RPC1 (1390 aa).

The Zn(2+) site is built by C69, C72, C79, H82, C109, and C112. K144 is a DNA binding site. Residues C156 and C159 each contribute to the Zn(2+) site. DNA is bound by residues K167, S326, K348, R353, R360, and R366. K445 is modified (N6-acetyllysine). Position 464 (R464) interacts with RNA. Mg(2+)-binding residues include D499, D501, and D503. D503 contacts RNA. The bridging helix stretch occupies residues 843–884; the sequence is TPTEFFFHTMAGREGLVDTAVKTAETGYMQRRLVKSLEDLCS. The tract at residues 1029-1070 is trigger loop; that stretch reads PGSAVGALCAQSIGEPGTQMTLKTFHFAGVASMNITLGVPRI. DNA is bound by residues R1159, R1305, and K1323.

This sequence belongs to the RNA polymerase beta' chain family. In terms of assembly, component of the RNA polymerase III (Pol III) (Pol III) complex consisting of 17 subunits: a ten-subunit catalytic core composed of POLR3A/RPC1, POLR3B/RPC2, POLR1C/RPAC1, POLR1D/RPAC2, POLR3K/RPC10, POLR2E/RPABC1, POLR2F/RPABC2, POLR2H/RPABC3, POLR2K/RPABC4 and POLR2L/RPABC5; a mobile stalk composed of two subunits POLR3H/RPC8 and CRCP/RPC9, protruding from the core and functioning primarily in transcription initiation; and additional subunits homologous to general transcription factors of the RNA polymerase II machinery, POLR3C/RPC3-POLR3F/RPC6-POLR3G/RPC7 heterotrimer required for transcription initiation and POLR3D/RPC4-POLR3E/RPC5 heterodimer involved in both transcription initiation and termination. Pol III exists as two alternative complexes defined by the mutually exclusive incorporation of subunit POLR3G/RPC7alpha or POLR3GL/RPC7beta. The presence of POLR3G/RPC7alpha or POLR3GL/RPC7beta differentially modulates the transcription potential of Pol III, with POLR3G/RPC7alpha specifically associated with transcription of snaR-A non-coding RNAs. As part of the RNA polymerase III complex, interacts with PKP2. It depends on Mg(2+) as a cofactor. As to expression, expressed in the brain, in the cortex and the white matter (at protein level).

It is found in the nucleus. Its subcellular location is the cytoplasm. The protein localises to the cytosol. The enzyme catalyses RNA(n) + a ribonucleoside 5'-triphosphate = RNA(n+1) + diphosphate. Functionally, catalytic core component of RNA polymerase III (Pol III), a DNA-dependent RNA polymerase which synthesizes small non-coding RNAs using the four ribonucleoside triphosphates as substrates. Synthesizes 5S rRNA, snRNAs, tRNAs and miRNAs from at least 500 distinct genomic loci. Pol III-mediated transcription cycle proceeds through transcription initiation, transcription elongation and transcription termination stages. During transcription initiation, Pol III is recruited to DNA promoters type I, II or III with the help of general transcription factors and other specific initiation factors. Once the polymerase has escaped from the promoter it enters the elongation phase during which RNA is actively polymerized, based on complementarity with the template DNA strand. Transcription termination involves the release of the RNA transcript and polymerase from the DNA. Forms Pol III active center together with the second largest subunit POLR3B/RPC2. Appends one nucleotide at a time to the 3' end of the nascent RNA, with POLR3A/RPC1 contributing a Mg(2+)-coordinating DxDGD motif, and POLR3B/RPC2 participating in the coordination of a second Mg(2+) ion and providing lysine residues believed to facilitate Watson-Crick base pairing between the incoming nucleotide and template base. Typically, Mg(2+) ions direct a 5' nucleoside triphosphate to form a phosphodiester bond with the 3' hydroxyl of the preceding nucleotide of the nascent RNA, with the elimination of pyrophosphate. Pol III plays a key role in sensing and limiting infection by intracellular bacteria and DNA viruses. Acts as a nuclear and cytosolic DNA sensor involved in innate immune response. Can sense non-self dsDNA that serves as template for transcription into dsRNA. The non-self RNA polymerase III transcripts, such as Epstein-Barr virus-encoded RNAs (EBERs) induce type I interferon and NF-kappa-B through the RIG-I pathway. The chain is DNA-directed RNA polymerase III subunit RPC1 from Homo sapiens (Human).